Here is a 348-residue protein sequence, read N- to C-terminus: D-alanine--D-alanine ligase (348 aa).

One can recognise an ATP-grasp domain in the interval 136–341 (KYLLQTVGIP…YSDLIEELIQ (206 aa)). An ATP-binding site is contributed by 169 to 224 (EGSLIYPVFVKPANMGSSVGISKVENREELQEALEEAFRYDARAIVEQGIEAREIE). Residues Asp295, Glu308, and Asn310 each coordinate Mg(2+).

This sequence belongs to the D-alanine--D-alanine ligase family. Mg(2+) serves as cofactor. The cofactor is Mn(2+).

It is found in the cytoplasm. The enzyme catalyses 2 D-alanine + ATP = D-alanyl-D-alanine + ADP + phosphate + H(+). Its pathway is cell wall biogenesis; peptidoglycan biosynthesis. Functionally, cell wall formation. This is D-alanine--D-alanine ligase (ddl) from Enterococcus faecalis (strain ATCC 700802 / V583).